A 95-amino-acid polypeptide reads, in one-letter code: MPNKMSAEKRVRVSEKRRVLNKAYKTSMKNKIKAVLAAIAQKKSAEEIMELFRKAQSAIDKAAKSGAIHKNQASRRKSRLAVKVKAYLGAEKQGV.

It belongs to the bacterial ribosomal protein bS20 family.

In terms of biological role, binds directly to 16S ribosomal RNA. This Fervidobacterium nodosum (strain ATCC 35602 / DSM 5306 / Rt17-B1) protein is Small ribosomal subunit protein bS20.